The chain runs to 213 residues: Leucyl/phenylalanyl-tRNA--protein transferase (213 aa).

It belongs to the L/F-transferase family.

Its subcellular location is the cytoplasm. The catalysed reaction is N-terminal L-lysyl-[protein] + L-leucyl-tRNA(Leu) = N-terminal L-leucyl-L-lysyl-[protein] + tRNA(Leu) + H(+). The enzyme catalyses N-terminal L-arginyl-[protein] + L-leucyl-tRNA(Leu) = N-terminal L-leucyl-L-arginyl-[protein] + tRNA(Leu) + H(+). It carries out the reaction L-phenylalanyl-tRNA(Phe) + an N-terminal L-alpha-aminoacyl-[protein] = an N-terminal L-phenylalanyl-L-alpha-aminoacyl-[protein] + tRNA(Phe). Functions in the N-end rule pathway of protein degradation where it conjugates Leu, Phe and, less efficiently, Met from aminoacyl-tRNAs to the N-termini of proteins containing an N-terminal arginine or lysine. This is Leucyl/phenylalanyl-tRNA--protein transferase from Campylobacter lari (strain RM2100 / D67 / ATCC BAA-1060).